The sequence spans 244 residues: tRNA pseudouridine synthase A (244 aa).

Catalysis depends on D52, which acts as the Nucleophile. Y111 is a binding site for substrate.

It belongs to the tRNA pseudouridine synthase TruA family. In terms of assembly, homodimer.

It catalyses the reaction uridine(38/39/40) in tRNA = pseudouridine(38/39/40) in tRNA. Formation of pseudouridine at positions 38, 39 and 40 in the anticodon stem and loop of transfer RNAs. The chain is tRNA pseudouridine synthase A from Thermosipho africanus (strain TCF52B).